We begin with the raw amino-acid sequence, 495 residues long: UDP-N-acetylmuramoyl-L-alanyl-D-glutamate--2,6-diaminopimelate ligase (495 aa).

UDP-N-acetyl-alpha-D-muramoyl-L-alanyl-D-glutamate is bound by residues L27, S29, and 44-46 (HKA). 116 to 122 (GTNGKTT) is an ATP binding site. UDP-N-acetyl-alpha-D-muramoyl-L-alanyl-D-glutamate contacts are provided by residues N157, 158-159 (TT), S185, Q191, and R193. The residue at position 225 (K225) is an N6-carboxylysine. Meso-2,6-diaminopimelate is bound by residues R390, 414–417 (DNPR), G465, and E469. The Meso-diaminopimelate recognition motif signature appears at 414-417 (DNPR).

Belongs to the MurCDEF family. MurE subfamily. Mg(2+) serves as cofactor. Carboxylation is probably crucial for Mg(2+) binding and, consequently, for the gamma-phosphate positioning of ATP.

Its subcellular location is the cytoplasm. It catalyses the reaction UDP-N-acetyl-alpha-D-muramoyl-L-alanyl-D-glutamate + meso-2,6-diaminopimelate + ATP = UDP-N-acetyl-alpha-D-muramoyl-L-alanyl-gamma-D-glutamyl-meso-2,6-diaminopimelate + ADP + phosphate + H(+). It participates in cell wall biogenesis; peptidoglycan biosynthesis. In terms of biological role, catalyzes the addition of meso-diaminopimelic acid to the nucleotide precursor UDP-N-acetylmuramoyl-L-alanyl-D-glutamate (UMAG) in the biosynthesis of bacterial cell-wall peptidoglycan. This chain is UDP-N-acetylmuramoyl-L-alanyl-D-glutamate--2,6-diaminopimelate ligase, found in Pectobacterium atrosepticum (strain SCRI 1043 / ATCC BAA-672) (Erwinia carotovora subsp. atroseptica).